Here is a 273-residue protein sequence, read N- to C-terminus: Putative methyltransferase Cher3 (273 aa).

The CheR-type methyltransferase domain occupies 1-273 (MTSERNTDIE…VKPQRIFRKS (273 aa)). S-adenosyl-L-methionine-binding positions include S76, R80, E114, D137, 199-200 (SL), and 215-216 (RN).

The protein is Putative methyltransferase Cher3 (cheR3) of Pseudomonas putida (strain ATCC 47054 / DSM 6125 / CFBP 8728 / NCIMB 11950 / KT2440).